Consider the following 3227-residue polypeptide: E3 ubiquitin-protein ligase ptr1 (3227 aa).

Disordered regions lie at residues 1806 to 1836 (SGAAQDSMGDQSLSSSSEESSDSDREEPPDL), 1869 to 1894 (MEFEDDQSGSADSVVSEDDADDVMYS), 1908 to 1929 (QDASSQNDDSSFDEASSHGDVI), and 2577 to 2607 (ATTGYTNDQDSRGSTVPKQDPGTTASRKDKK). A compositionally biased stretch (low complexity) spans 1811–1823 (DSMGDQSLSSSSE). The segment covering 1883–1894 (VSEDDADDVMYS) has biased composition (acidic residues). The span at 2577–2601 (ATTGYTNDQDSRGSTVPKQDPGTTA) shows a compositional bias: polar residues. The region spanning 2891–3227 (DADEVKFSKL…NEGSEGFGFA (337 aa)) is the HECT domain. Cysteine 3194 acts as the Glycyl thioester intermediate in catalysis.

Belongs to the UPL family. TOM1/PTR1 subfamily.

The protein localises to the nucleus. The catalysed reaction is S-ubiquitinyl-[E2 ubiquitin-conjugating enzyme]-L-cysteine + [acceptor protein]-L-lysine = [E2 ubiquitin-conjugating enzyme]-L-cysteine + N(6)-ubiquitinyl-[acceptor protein]-L-lysine.. It participates in protein modification; protein ubiquitination. Functionally, probable ubiquitin ligase protein involved in mRNA export. E3 ubiquitin ligase proteins mediate ubiquitination and subsequent proteasomal degradation of target proteins. Probably participates in mRNA export from the nucleus by regulating the transport of hnRNP proteins such as rae1. The chain is E3 ubiquitin-protein ligase ptr1 (ptr1) from Schizosaccharomyces pombe (strain 972 / ATCC 24843) (Fission yeast).